The following is a 558-amino-acid chain: MSRRTDSLCLDEYLSSELKKRTHILECAWNQEHDDDEEEEEVKVDQGSEETTSSHDIYGDVGKRAPNEFEKIDRLTTIKVYIAWLALFVFAHIREYVTRFGFVKDLSSKENAKMKDFVPLFSDFEAFYQRNCYIKVRDVFERPICSVPGATVDLVDRVSHDGNWTYEYPGTRTNVINVGSYNYLGFAQSAGPCAEQSASSIDREGLSCCTTVHERGRSVSQAKLEKLVAEFLGVEDAICFSMGFATNSMNAPCLVDKHSLIISDKYNHASLILGCRLSGASTKVFEHNDMESLERILRDAIAYGNPKTHRPYKKILIIVEGIYSMEGSICNLPGIIALKKKYQAYLYLDEAHSIGAMGKTGKGVVEYWGCDPKDVDILMGTFTKSFGAAGGYIAGSKRTVDHLRAASPTGYYSSPMSPPIAQQIYTSMSIIMGKDGTKDGAQRIERLARNSHYFRMKLKQNGFIVYGSNDSPVVPMLIYFPTMCGFYGREMLARNIGCVVVSFPATHMTEGRVRFCISAAHTKEQLDEVLETVNLLGSMSRSKFSKRSHLYKNQKIEW.

Residues 33 to 42 (HDDDEEEEEV) are compositionally biased toward acidic residues. A disordered region spans residues 33–57 (HDDDEEEEEVKVDQGSEETTSSHDI). Lys-384 bears the N6-(pyridoxal phosphate)lysine mark.

The protein belongs to the class-II pyridoxal-phosphate-dependent aminotransferase family. Heterodimer of sptl-1/sptl-2. The cofactor is pyridoxal 5'-phosphate.

It catalyses the reaction L-serine + hexadecanoyl-CoA + H(+) = 3-oxosphinganine + CO2 + CoA. Its pathway is lipid metabolism; sphingolipid metabolism. Its function is as follows. Component of the serine palmitoyltransferase (SPT) that catalyzes the first committed step in sphingolipid biosynthesis, which is the condensation of an acyl-CoA species and L-serine. The catalytic core is composed of a heterodimer of sptl-1 and sptl-2 or sptl-1 and sptl-3. Required for the specification of abicobasal polarity and development of the gut lumen. The polypeptide is Serine palmitoyltransferase 2 (sptl-2) (Caenorhabditis elegans).